Here is a 1647-residue protein sequence, read N- to C-terminus: MAP kinase-activating death domain protein (1647 aa).

Positions 14–268 constitute a uDENN domain; it reads YLVIVGARHP…VPVSGQKRVD (255 aa). Positions 108–122 are enriched in basic and acidic residues; it reads EKGEGGAGSRGKEGT. A disordered region spans residues 108–168; that stretch reads EKGEGGAGSR…GKRRAKAGSR (61 aa). Residues 128–141 show a composition bias toward low complexity; it reads SEEGGTESSESGSS. The segment covering 142-157 has biased composition (polar residues); it reads LQPLSADSTPDVNQSP. The residue at position 156 (Ser-156) is a Phosphoserine. A compositionally biased stretch (basic residues) spans 158-167; it reads RGKRRAKAGS. A cDENN domain is found at 289 to 429; the sequence is RFTLVDFPLH…ESLELKKHLK (141 aa). The dDENN domain maps to 431 to 565; that stretch reads ALASMSLNTQ…LNPTNYAFQR (135 aa). 2 disordered regions span residues 604-636 and 678-842; these read ALSV…SSYS and NQKE…STEG. The span at 615–630 shows a compositional bias: acidic residues; that stretch reads SEPTDDSGSDSMDYDD. 2 positions are modified to phosphoserine: Ser-689 and Ser-692. Residues 689 to 699 show a composition bias toward polar residues; that stretch reads SENSQENPPLR. Residues 700–712 show a composition bias toward low complexity; sequence SSSSTTASSSPST. A compositionally biased stretch (basic and acidic residues) spans 750–768; the sequence is NVDRRQAEIGEGSVRRRIY. The span at 790–804 shows a compositional bias: polar residues; the sequence is ESYTPRFSQHVSGNR. Phosphoserine is present on residues Ser-813, Ser-818, and Ser-820. Residues 827 to 840 are compositionally biased toward low complexity; the sequence is RASSPNSTVSNTST. 5 positions are modified to phosphoserine: Ser-858, Ser-862, Ser-916, Ser-921, and Ser-930. 3 disordered regions span residues 913–941, 1051–1110, and 1146–1243; these read QKSS…SSEN, KEPD…DTRS, and VFDL…DSEI. Residues 932–941 show a composition bias toward polar residues; that stretch reads QGRSSNSSEN. Ser-1059 carries the phosphoserine modification. Thr-1061 and Thr-1066 each carry phosphothreonine. A Phosphoserine modification is found at Ser-1110. Composition is skewed to polar residues over residues 1158–1173, 1189–1207, and 1234–1243; these read QISA…SSQR, RSSS…SSGE, and SRGTLSDSEI. Thr-1237 is subject to Phosphothreonine. Phosphoserine is present on residues Ser-1239 and Ser-1270. Residues 1340–1415 enclose the Death domain; sequence GMDQGPQEMI…GLVYSQQINE (76 aa).

The protein belongs to the MADD family. As to quaternary structure, interacts (via death domain) with TNFRSF1A (via death domain). Interacts with PIDD1. Interacts with YWHAZ. Interacts (via death domain) with KIF1B; links the motor KIF1B to Rab3-carrying vesicles in anterograde synaptic vesicle transport. Interacts with KIF1A. Interacts (via uDENN domain) with RAB3A, RAB3B, RAB3C and RAB3D; the GTP-bound form of the Rab proteins is preferred for interaction. In terms of tissue distribution, expressed in testis, ovary, brain and heart. Expressed in spleen, thymus, prostate, testis, ovary, small instestine and colon. Expressed in liver. Not detected in the brain, breast, kidney, lung, ovary, pancreas, testis, uterus, stomach and thyroid. As to expression, expressed in the brain, breast, kidney, lung, ovary, pancreas, testis, uterus, stomach and thyroid.

The protein localises to the cell membrane. It localises to the cytoplasm. It is found in the cell projection. Its subcellular location is the axon. In terms of biological role, guanyl-nucleotide exchange factor that regulates small GTPases of the Rab family. Converts GDP-bound inactive form of RAB27A and RAB27B to the GTP-bound active forms. Converts GDP-bound inactive form of RAB3A, RAB3C and RAB3D to the GTP-bound active forms, GTPases involved in synaptic vesicle exocytosis and vesicle secretion. Plays a role in synaptic vesicle formation and in vesicle trafficking at the neuromuscular junction. Involved in up-regulating a post-docking step of synaptic exocytosis in central synapses. Probably by binding to the motor proteins KIF1B and KIF1A, mediates motor-dependent transport of GTP-RAB3A-positive vesicles to the presynaptic nerve terminals. Plays a role in TNFA-mediated activation of the MAPK pathway, including ERK1/2. May link TNFRSF1A with MAP kinase activation. May be involved in the regulation of TNFA-induced apoptosis. The sequence is that of MAP kinase-activating death domain protein from Homo sapiens (Human).